The sequence spans 85 residues: U4-theraphotoxin-Hhn1a (85 aa).

The signal sequence occupies residues 1–22; sequence MKVTLIVILTCAAVLVLHTTAA. The propeptide occupies 23 to 48; it reads EELEAESQLMEVGMPDTELAAVDEER. 3 disulfides stabilise this stretch: Cys-52/Cys-66, Cys-56/Cys-77, and Cys-71/Cys-82.

This sequence belongs to the neurotoxin 12 (Hwtx-2) family. 02 (Hwtx-2) subfamily. In terms of assembly, monomer. Expressed by the venom gland.

Its subcellular location is the secreted. Its function is as follows. Neurotoxin active on both insects and mammals. In Cyriopagopus hainanus (Chinese bird spider), this protein is U4-theraphotoxin-Hhn1a.